Consider the following 298-residue polypeptide: Syntaxin-4 (298 aa).

The Cytoplasmic segment spans residues 1 to 274 (MRDRTHELRQ…NQKKARKKKV (274 aa)). 6 positions are modified to phosphoserine: serine 15, serine 29, serine 36, serine 117, serine 208, and serine 248. Residues 38 to 163 (DDEFFQKVQT…ERIRRQLKIT (126 aa)) are a coiled coil. The tract at residues 154–298 (ERIRRQLKIT…VIIGITITVG (145 aa)) is interaction with CENPF. A t-SNARE coiled-coil homology domain is found at 200–262 (LNEISARHSE…ERGQEHVKIA (63 aa)). The helical; Anchor for type IV membrane protein transmembrane segment at 275–295 (MIAICVSVTVLILAVIIGITI) threads the bilayer. Topologically, residues 296–298 (TVG) are extracellular.

Belongs to the syntaxin family. Interacts with STXBP6. Component of the SNARE complex composed of STX4, SNAP23 and VAMP7 that interacts with SYT7 during lysosomal exocytosis. Found in a complex with VAMP8 and SNAP23. Detected in a complex with SNAP23 and STXBP4. Interacts with VAMP2. Interacts with SNAP23 and SNAPIN. Interacts with LLGL1. Interacts (via C-terminus) with CENPF. Interacts with DOC2B. Interacts with STXBP3; excludes interaction with DOC2B and SNAP25. Interacts with STXBP4; excludes interaction with VAMP2. Interacts with STXBP5L. As to expression, expressed in the outer and inner hair cells of the cochlea.

It is found in the cell membrane. The protein localises to the cell projection. Its subcellular location is the neuron projection. The protein resides in the stereocilium. Its function is as follows. Plasma membrane t-SNARE that mediates docking of transport vesicles. Necessary for the translocation of SLC2A4 from intracellular vesicles to the plasma membrane. In neurons, recruited at neurite tips to membrane domains rich in the phospholipid 1-oleoyl-2-palmitoyl-PC (OPPC) which promotes neurite tip surface expression of the dopamine transporter SLC6A3/DAT by facilitating fusion of SLC6A3-containing transport vesicles with the plasma membrane. Together with STXB3 and VAMP2, may also play a role in docking/fusion of intracellular GLUT4-containing vesicles with the cell surface in adipocytes and in docking of synaptic vesicles at presynaptic active zones. Required for normal hearing. The protein is Syntaxin-4 (Stx4) of Mus musculus (Mouse).